Consider the following 163-residue polypeptide: Oocyte-secreted protein 1 (163 aa).

Positions 1-21 (MKPSSGLRGLLVLFSLTWTCA) are cleaved as a signal peptide.

The protein belongs to the PLAC1 family. In terms of tissue distribution, oocyte-specific.

Its subcellular location is the secreted. Functionally, may be involved in cell differentiation. This chain is Oocyte-secreted protein 1 (OOSP1), found in Bos taurus (Bovine).